The primary structure comprises 220 residues: Ribosomal RNA large subunit methyltransferase E (220 aa).

S-adenosyl-L-methionine is bound by residues G60, W62, D92, D108, and D133. The active-site Proton acceptor is K173.

Belongs to the class I-like SAM-binding methyltransferase superfamily. RNA methyltransferase RlmE family.

It localises to the cytoplasm. The catalysed reaction is uridine(2552) in 23S rRNA + S-adenosyl-L-methionine = 2'-O-methyluridine(2552) in 23S rRNA + S-adenosyl-L-homocysteine + H(+). In terms of biological role, specifically methylates the uridine in position 2552 of 23S rRNA at the 2'-O position of the ribose in the fully assembled 50S ribosomal subunit. In Paraburkholderia xenovorans (strain LB400), this protein is Ribosomal RNA large subunit methyltransferase E.